The primary structure comprises 187 residues: GTP cyclohydrolase 1 (187 aa).

Zn(2+) is bound by residues C76, H79, and C148.

This sequence belongs to the GTP cyclohydrolase I family. As to quaternary structure, homomer.

The enzyme catalyses GTP + H2O = 7,8-dihydroneopterin 3'-triphosphate + formate + H(+). Its pathway is cofactor biosynthesis; 7,8-dihydroneopterin triphosphate biosynthesis; 7,8-dihydroneopterin triphosphate from GTP: step 1/1. This is GTP cyclohydrolase 1 from Streptococcus gordonii (strain Challis / ATCC 35105 / BCRC 15272 / CH1 / DL1 / V288).